Here is a 25-residue protein sequence, read N- to C-terminus: Aurein-5.2 (25 aa).

Expressed by the skin dorsal glands.

Its subcellular location is the secreted. Has antimicrobial activity against L.lactis and S.uberis. The polypeptide is Aurein-5.2 (Ranoidea raniformis (Southern bell frog)).